An 80-amino-acid chain; its full sequence is FXYD domain-containing ion transport regulator 7 (80 aa).

Topologically, residues 1–22 (MATPTQSPTNVPEETDPFFYDY) are extracellular. Thr-3, Thr-5, and Thr-9 each carry an O-linked (GlcNAc) threonine glycan. A helical transmembrane segment spans residues 23–45 (ATVQTVGMTLATIMFVLGIIIIL). Topologically, residues 46–80 (SKKVKCRKADSRSESPTCKSCKSELPSSAPGGGGV) are cytoplasmic. Residues 55–80 (DSRSESPTCKSCKSELPSSAPGGGGV) are disordered. The residue at position 73 (Ser-73) is a Phosphoserine.

The protein belongs to the FXYD family. Regulatory subunit of the sodium/potassium-transporting ATPase which is composed of a catalytic alpha subunit, a non-catalytic beta subunit and an additional regulatory subunit. The regulatory subunit, a member of the FXYD protein family, modulates the enzymatic activity in a tissue- and isoform-specific way by changing affinities of the Na+/K+-ATPase toward Na(+), K(+) or ATP. Post-translationally, O-glycosylated; required for stabilization and translocation to the plasma membrane.

It localises to the cell membrane. In terms of biological role, associates with and regulates the activity of the sodium/potassium-transporting ATPase (NKA) which catalyzes the hydrolysis of ATP coupled with the exchange of Na(+) and K(+) ions across the plasma membrane. Reduces the apparent affinity for external K(+), an effect that depends on the presence of external Na(+) and voltage. Increases the apparent affinity for intracellular Na(+). This Mus musculus (Mouse) protein is FXYD domain-containing ion transport regulator 7 (Fxyd7).